We begin with the raw amino-acid sequence, 277 residues long: Shikimate dehydrogenase (NADP(+)) (277 aa).

Shikimate contacts are provided by residues 15-17 (SLS) and threonine 62. The active-site Proton acceptor is lysine 66. Shikimate contacts are provided by asparagine 87 and aspartate 102. NADP(+)-binding positions include 127–131 (GAGGA), 151–156 (NRTVDK), and isoleucine 219. Shikimate is bound at residue tyrosine 221. Glycine 242 lines the NADP(+) pocket.

This sequence belongs to the shikimate dehydrogenase family. As to quaternary structure, homodimer.

The catalysed reaction is shikimate + NADP(+) = 3-dehydroshikimate + NADPH + H(+). It functions in the pathway metabolic intermediate biosynthesis; chorismate biosynthesis; chorismate from D-erythrose 4-phosphate and phosphoenolpyruvate: step 4/7. Involved in the biosynthesis of the chorismate, which leads to the biosynthesis of aromatic amino acids. Catalyzes the reversible NADPH linked reduction of 3-dehydroshikimate (DHSA) to yield shikimate (SA). This chain is Shikimate dehydrogenase (NADP(+)), found in Bacillus cereus (strain ATCC 10987 / NRS 248).